The sequence spans 527 residues: Endogenous retrovirus group FC1 member 1 Env polyprotein (527 aa).

Residues 1–411 are surface protein; the sequence is MNSPCDRLQQ…EPRPQNKSKW (411 aa). Positions 280–283 match the CXXC motif; the sequence is CFLC. The tract at residues 412–432 is fusion peptide; that stretch reads AIFLPLVLGISLASSLVASGL. The transmembrane protein stretch occupies residues 412-527; it reads AIFLPLVLGI…LKKKKSSKRS (116 aa). The CKS-17 motif lies at 477-493; the sequence is AQNRQALDLLMAEKGRT. Cys-494 and Cys-501 form a disulfide bridge. The CX6CC signature appears at 494–502; sequence CLFLQEECC.

Belongs to the gamma type-C retroviral envelope protein family. HERV class-I F(c)2 env subfamily. The CXXC motif is highly conserved across a broad range of retroviral envelope proteins. It is thought to participate in the formation of a labile disulfide bond possibly with the CX6CC motif present in the transmembrane domain. Low expression in skin and testis.

It is found in the virion. In terms of biological role, retroviral envelope proteins mediate receptor recognition and membrane fusion during early infection. Endogenous envelope proteins may have kept, lost or modified their original function during evolution. This endogenous envelope protein has lost its original fusogenic properties. This Homo sapiens (Human) protein is Endogenous retrovirus group FC1 member 1 Env polyprotein (ERVFC1-1).